The sequence spans 589 residues: Arginine--tRNA ligase (589 aa).

A 'HIGH' region motif is present at residues 131 to 141 (ANPTGPLHVGH).

It belongs to the class-I aminoacyl-tRNA synthetase family. Monomer.

Its subcellular location is the cytoplasm. It carries out the reaction tRNA(Arg) + L-arginine + ATP = L-arginyl-tRNA(Arg) + AMP + diphosphate. The protein is Arginine--tRNA ligase of Legionella pneumophila (strain Paris).